The sequence spans 25 residues: Germin-like protein (25 aa).

The protein belongs to the germin family.

In Populus euphratica (Euphrates poplar), this protein is Germin-like protein.